Here is a 38-residue protein sequence, read N- to C-terminus: Zinc-containing ferredoxin (38 aa).

A compositionally biased stretch (polar residues) spans 1-11; the sequence is GIDPNFRTSRP. A disordered region spans residues 1 to 38; it reads GIDPNFRTSRPVTGDHAGHKVYAPADPPVKEKALGIHG. Residues 1 to 38 form an N-terminal extension region; it reads GIDPNFRTSRPVTGDHAGHKVYAPADPPVKEKALGIHG. His16 and His19 together coordinate Zn(2+). Residues 28 to 38 show a composition bias toward basic and acidic residues; that stretch reads PVKEKALGIHG. An N6-methyllysine modification is found at Lys30. Residue His37 participates in Zn(2+) binding.

It depends on [3Fe-4S] cluster as a cofactor. Requires [4Fe-4S] cluster as cofactor. Zn(2+) is required as a cofactor.

Ferredoxins are iron-sulfur proteins that transfer electrons in a wide variety of metabolic reactions. The protein is Zinc-containing ferredoxin (zfx) of Metallosphaera prunae.